Reading from the N-terminus, the 117-residue chain is Aspartate 1-decarboxylase (117 aa).

The Schiff-base intermediate with substrate; via pyruvic acid role is filled by Ser25. Ser25 carries the post-translational modification Pyruvic acid (Ser). Thr57 contacts substrate. The Proton donor role is filled by Tyr58. Residue 73–75 participates in substrate binding; the sequence is GAA.

The protein belongs to the PanD family. As to quaternary structure, heterooctamer of four alpha and four beta subunits. Pyruvate is required as a cofactor. In terms of processing, is synthesized initially as an inactive proenzyme, which is activated by self-cleavage at a specific serine bond to produce a beta-subunit with a hydroxyl group at its C-terminus and an alpha-subunit with a pyruvoyl group at its N-terminus.

Its subcellular location is the cytoplasm. The enzyme catalyses L-aspartate + H(+) = beta-alanine + CO2. The protein operates within cofactor biosynthesis; (R)-pantothenate biosynthesis; beta-alanine from L-aspartate: step 1/1. Catalyzes the pyruvoyl-dependent decarboxylation of aspartate to produce beta-alanine. This chain is Aspartate 1-decarboxylase, found in Bacteroides thetaiotaomicron (strain ATCC 29148 / DSM 2079 / JCM 5827 / CCUG 10774 / NCTC 10582 / VPI-5482 / E50).